The primary structure comprises 39 residues: Cytochrome b559 subunit beta (39 aa).

The chain crosses the membrane as a helical span at residues 14–30 (WLAIHGLAVPTVFFLGS). Histidine 18 lines the heme pocket.

As to quaternary structure, heterodimer of an alpha subunit and a beta subunit. PSII is composed of 1 copy each of membrane proteins PsbA, PsbB, PsbC, PsbD, PsbE, PsbF, PsbH, PsbI, PsbJ, PsbK, PsbL, PsbM, PsbT, PsbX, PsbY, PsbZ, Psb30/Ycf12, at least 3 peripheral proteins of the oxygen-evolving complex and a large number of cofactors. It forms dimeric complexes. Requires heme b as cofactor. The N-terminus is blocked.

The protein localises to the plastid. It localises to the chloroplast thylakoid membrane. Functionally, this b-type cytochrome is tightly associated with the reaction center of photosystem II (PSII). PSII is a light-driven water:plastoquinone oxidoreductase that uses light energy to abstract electrons from H(2)O, generating O(2) and a proton gradient subsequently used for ATP formation. It consists of a core antenna complex that captures photons, and an electron transfer chain that converts photonic excitation into a charge separation. The protein is Cytochrome b559 subunit beta of Spinacia oleracea (Spinach).